A 435-amino-acid chain; its full sequence is NADH-quinone oxidoreductase subunit D (435 aa).

The protein belongs to the complex I 49 kDa subunit family. In terms of assembly, NDH-1 is composed of 14 different subunits. Subunits NuoB, C, D, E, F, and G constitute the peripheral sector of the complex.

The protein localises to the cell inner membrane. It carries out the reaction a quinone + NADH + 5 H(+)(in) = a quinol + NAD(+) + 4 H(+)(out). Functionally, NDH-1 shuttles electrons from NADH, via FMN and iron-sulfur (Fe-S) centers, to quinones in the respiratory chain. The immediate electron acceptor for the enzyme in this species is believed to be ubiquinone. Couples the redox reaction to proton translocation (for every two electrons transferred, four hydrogen ions are translocated across the cytoplasmic membrane), and thus conserves the redox energy in a proton gradient. This is NADH-quinone oxidoreductase subunit D from Xanthomonas euvesicatoria pv. vesicatoria (strain 85-10) (Xanthomonas campestris pv. vesicatoria).